The sequence spans 497 residues: Cytochrome P450 monooxygenase cicH (497 aa).

Residues alanine 2–phenylalanine 19 form a helical membrane-spanning segment. A heme-binding site is contributed by cysteine 439. Asparagine 443 is a glycosylation site (N-linked (GlcNAc...) asparagine).

This sequence belongs to the cytochrome P450 family. Heme is required as a cofactor.

Its subcellular location is the membrane. It functions in the pathway phytotoxin biosynthesis. Its function is as follows. Cytochrome P450 monooxygenase; part of the gene cluster that mediates the biosynthesis of cichorine, a phytotoxin active against knapweed, corn, and soybeans. The first step in the pathway is performed by the non-reducing polyketide synthase pkbA that condenses one acetyl-CoA starter unit with 3 malonyl-CoA units. PkbA also catalyzes one methylation step to produce 3-methylorsellinate. The nonribosomal peptide synthase-like protein cicB, the cytochrome P450 monooxygenase cicH and the O-methyltransferase cicE are involved in the conversion of 3-methylorsellinate into nidulol. CicB converts 3-methylorsellinate to a yet unidentified intermediate, cicH may play a ring-closing role for cichorine and cicE is plausibly responsible for the methylation of one of the phenol groups. The oxidoreductase cicC acts downstream with still unidentified enzymes to further convert nidulol into cichorine. The sequence is that of Cytochrome P450 monooxygenase cicH from Emericella nidulans (strain FGSC A4 / ATCC 38163 / CBS 112.46 / NRRL 194 / M139) (Aspergillus nidulans).